Reading from the N-terminus, the 256-residue chain is Photosystem I chlorophyll a/b-binding protein 5, chloroplastic (256 aa).

The transit peptide at 1–32 directs the protein to the chloroplast; that stretch reads MAVVLRGGITGGFLHHRRDASSVITRRISSVK. An N-acetylalanine modification is found at A33. W49 contributes to the chlorophyll b binding site. Chlorophyll a-binding residues include F69 and E88. R93 is a chlorophyll b binding site. 2 helical membrane passes run 94-113 and 129-146; these read FAMLGVAGILFTDLLRTTGI and FASTKTLIVVQFLLMGFA. Residues E147 and R150 each contribute to the chlorophyll b site. 6 residues coordinate chlorophyll a: K205, E206, N209, R211, Q223, and H238. The helical transmembrane segment at 212–232 threads the bilayer; that stretch reads LAMMAMLGFFVQASVTHTGPI.

This sequence belongs to the light-harvesting chlorophyll a/b-binding (LHC) protein family. As to quaternary structure, the LHC complex consists of chlorophyll a-b binding proteins. Homodimer. Heterodimer with LHCA2 and, possibly, LHCA3. Can substitute to LHCA4 to form a complex with LHCA1. Binds pigments. Element of the NAD(P)H dehydrogenase-photosystem I supercomplex (NDH-PSI). Binds at least 14 chlorophylls (8 Chl-a and 6 Chl-b) and carotenoids such as lutein and neoxanthin. is required as a cofactor. Post-translationally, photoregulated by reversible phosphorylation of its threonine residues.

Its subcellular location is the plastid. It is found in the chloroplast thylakoid membrane. Its function is as follows. The light-harvesting complex (LHC) functions as a light receptor, it captures and delivers excitation energy to photosystems with which it is closely associated. Seems involved in the function of the photosystem I in low light conditions, when other LHCA proteins are less abundant. Required, together with LHCA6, for the formation of a full-size NAD(P)H dehydrogenase-photosystem I supercomplex (NDH-PSI) that triggers cyclic and chlororespiratory electron transport in chloroplast thylakoids, especially under stress conditions (e.g. increased light intensity). The protein is Photosystem I chlorophyll a/b-binding protein 5, chloroplastic of Arabidopsis thaliana (Mouse-ear cress).